The sequence spans 56 residues: uncharacterized protein (56 aa).

This is an uncharacterized protein from Saccharomyces cerevisiae (strain ATCC 204508 / S288c) (Baker's yeast).